Reading from the N-terminus, the 688-residue chain is Glycine--tRNA ligase beta subunit (688 aa).

Belongs to the class-II aminoacyl-tRNA synthetase family. In terms of assembly, tetramer of two alpha and two beta subunits.

Its subcellular location is the cytoplasm. It carries out the reaction tRNA(Gly) + glycine + ATP = glycyl-tRNA(Gly) + AMP + diphosphate. This is Glycine--tRNA ligase beta subunit from Lactobacillus delbrueckii subsp. bulgaricus (strain ATCC BAA-365 / Lb-18).